The primary structure comprises 350 residues: Probable 2-dehydropantoate 2-reductase (350 aa).

Residues 9–14 (GAGSIG) and Asn115 contribute to the NADP(+) site. Asn115 contacts substrate. The active-site Proton donor is the Lys213. Substrate is bound by residues Asn217, Asn221, and Ser295. NADP(+) is bound at residue Glu307.

It belongs to the ketopantoate reductase family.

It carries out the reaction (R)-pantoate + NADP(+) = 2-dehydropantoate + NADPH + H(+). The protein operates within cofactor biosynthesis; (R)-pantothenate biosynthesis; (R)-pantoate from 3-methyl-2-oxobutanoate: step 2/2. Catalyzes the NADPH-dependent reduction of ketopantoate into pantoic acid. The sequence is that of Probable 2-dehydropantoate 2-reductase from Schizosaccharomyces pombe (strain 972 / ATCC 24843) (Fission yeast).